We begin with the raw amino-acid sequence, 421 residues long: Testin (421 aa).

A PET domain is found at 92–199 (MILTNPVAAK…GDVKLPCEMD (108 aa)). 3 consecutive LIM zinc-binding domains span residues 234–297 (YSCY…CDSE), 299–359 (PRCA…NHAV), and 362–421 (QGCH…KRMS).

Belongs to the prickle / espinas / testin family. In terms of assembly, interacts via LIM domain 1 with ZYX. Interacts (via LIM domain 3) with ENAH and VASP. Interacts with ALKBH4, talin, actin, alpha-actinin, GRIP1 and PXN. Interacts (via LIM domain 2) with ACTL7A (via N-terminus). Heterodimer with ACTL7A; the heterodimer interacts with ENAH to form a heterotrimer.

The protein localises to the cytoplasm. The protein resides in the cell junction. Its subcellular location is the focal adhesion. Scaffold protein that may play a role in cell adhesion, cell spreading and in the reorganization of the actin cytoskeleton. Plays a role in the regulation of cell proliferation. May act as a tumor suppressor. This is Testin (TES) from Nomascus leucogenys (Northern white-cheeked gibbon).